Reading from the N-terminus, the 26-residue chain is Aldehyde dehydrogenase beta chain (26 aa).

As to quaternary structure, heterotrimer composed of an alpha, a beta and a gamma chain. It depends on FAD as a cofactor.

The enzyme catalyses an aldehyde + a quinone + H2O = a quinol + a carboxylate + H(+). The polypeptide is Aldehyde dehydrogenase beta chain (Amycolatopsis methanolica).